Reading from the N-terminus, the 82-residue chain is RNA-binding protein BPUM_0095 (82 aa).

It belongs to the eukaryotic ribosomal protein eL8 family.

This is RNA-binding protein BPUM_0095 from Bacillus pumilus (strain SAFR-032).